Consider the following 492-residue polypeptide: AAA-ATPase At3g28520 (492 aa).

The chain crosses the membrane as a helical span at residues I7–Y25. G249–S256 provides a ligand contact to ATP. Disordered regions lie at residues K313–V334 and K462–K492. 2 stretches are compositionally biased toward basic and acidic residues: residues E323–K332 and K462–N484.

The protein belongs to the AAA ATPase family. BCS1 subfamily. It depends on Mg(2+) as a cofactor.

The protein resides in the membrane. It carries out the reaction ATP + H2O = ADP + phosphate + H(+). This chain is AAA-ATPase At3g28520, found in Arabidopsis thaliana (Mouse-ear cress).